Consider the following 150-residue polypeptide: Large ribosomal subunit protein bL9 (150 aa).

This sequence belongs to the bacterial ribosomal protein bL9 family.

Binds to the 23S rRNA. The chain is Large ribosomal subunit protein bL9 from Streptococcus pyogenes serotype M2 (strain MGAS10270).